Here is a 1044-residue protein sequence, read N- to C-terminus: Phosphatidylinositol 4,5-bisphosphate 3-kinase catalytic subunit delta isoform (1044 aa).

The PI3K-ABD domain occupies 16 to 105 (ENQSVVVDFL…LPVLRLVARE (90 aa)). The region spanning 187 to 278 (NRALLVNVKF…GLTPHLTMVH (92 aa)) is the PI3K-RBD domain. The interval 287 to 312 (DEQSNPAPQVQKPRAKPPPIPAKKPS) is disordered. Residues 319-476 (LEQPFRIELI…SAAALLICLP (158 aa)) enclose the C2 PI3K-type domain. One can recognise a PIK helical domain in the interval 497–674 (HSECVHVTEE…GLILEAYCRG (178 aa)). The residue at position 524 (Y524) is a Phosphotyrosine. In terms of domain architecture, PI3K/PI4K catalytic spans 745 to 1027 (CVEQCTFMDS…KFNEALRESW (283 aa)). Residues 751 to 757 (FMDSKMK) are G-loop. Residues 890-898 (GIGDRHSDN) form a catalytic loop region. The interval 909–935 (HIDFGHFLGNFKTKFGINRERVPFILT) is activation loop. S1039 is modified (phosphoserine; by autocatalysis).

Belongs to the PI3/PI4-kinase family. Heterodimer of a catalytic subunit PIK3CD and a p85 regulatory subunit (PIK3R1, PIK3R2 or PIK3R3). Interacts with ERAS. Interacts with HRAS. In terms of processing, autophosphorylation on Ser-1039 results in the almost complete inactivation of the lipid kinase activity. As to expression, in humans, the highest levels of expression are seen in peripheral blood mononuclear cells, spleen, and thymus, and low levels of expression in testes, uterus, colon, and small intestine but not in other tissues examined including prostate, heart, brain, and liver. Isoform 2 is expressed in normal thymus, lung and spleen tissues, and is detected at low levels in normal lysates from colon and ovarian biopsies, at elevated levels in lysates from colorectal tumors and is abundantly expressed in some ovarian tumors (at protein level). Both isoform 1 and isoform 2 are widely expressed. Isoform 1 is expressed predominantly in leukocytes.

The protein resides in the cytoplasm. The catalysed reaction is a 1,2-diacyl-sn-glycero-3-phospho-(1D-myo-inositol-4,5-bisphosphate) + ATP = a 1,2-diacyl-sn-glycero-3-phospho-(1D-myo-inositol-3,4,5-trisphosphate) + ADP + H(+). The enzyme catalyses a 1,2-diacyl-sn-glycero-3-phospho-(1D-myo-inositol) + ATP = a 1,2-diacyl-sn-glycero-3-phospho-(1D-myo-inositol-3-phosphate) + ADP + H(+). It catalyses the reaction 1-octadecanoyl-2-(5Z,8Z,11Z,14Z)-eicosatetraenoyl-sn-glycero-3-phospho-1D-myo-inositol 4,5-bisphosphate + ATP = 1-octadecanoyl-2-(5Z,8Z,11Z,14Z-eicosatetraenoyl)-sn-glycero-3-phospho-(1D-myo-inositol 3,4,5-triphosphate) + ADP + H(+). The protein operates within phospholipid metabolism; phosphatidylinositol phosphate biosynthesis. Activated by growth factors and cytokine receptors through a tyrosine-kinase-dependent mechanism. Activated by RAS. IC87114 inhibits lipid kinase activity and is selective in cells at doses up to 5-10 uM. IC87114 blocks T-cell receptor signaling in naive and memory T-cells and reduces cytokine production by memory T-cells. Phosphoinositide-3-kinase (PI3K) phosphorylates phosphatidylinositol (PI) and its phosphorylated derivatives at position 3 of the inositol ring to produce 3-phosphoinositides. Uses ATP and PtdIns(4,5)P2 (phosphatidylinositol 4,5-bisphosphate) to generate phosphatidylinositol 3,4,5-trisphosphate (PIP3). PIP3 plays a key role by recruiting PH domain-containing proteins to the membrane, including AKT1 and PDPK1, activating signaling cascades involved in cell growth, survival, proliferation, motility and morphology. Mediates immune responses. Plays a role in B-cell development, proliferation, migration, and function. Required for B-cell receptor (BCR) signaling. Mediates B-cell proliferation response to anti-IgM, anti-CD40 and IL4 stimulation. Promotes cytokine production in response to TLR4 and TLR9. Required for antibody class switch mediated by TLR9. Involved in the antigen presentation function of B-cells. Involved in B-cell chemotaxis in response to CXCL13 and sphingosine 1-phosphate (S1P). Required for proliferation, signaling and cytokine production of naive, effector and memory T-cells. Required for T-cell receptor (TCR) signaling. Mediates TCR signaling events at the immune synapse. Activation by TCR leads to antigen-dependent memory T-cell migration and retention to antigenic tissues. Together with PIK3CG participates in T-cell development. Contributes to T-helper cell expansion and differentiation. Required for T-cell migration mediated by homing receptors SELL/CD62L, CCR7 and S1PR1 and antigen dependent recruitment of T-cells. Together with PIK3CG is involved in natural killer (NK) cell development and migration towards the sites of inflammation. Participates in NK cell receptor activation. Plays a role in NK cell maturation and cytokine production. Together with PIK3CG is involved in neutrophil chemotaxis and extravasation. Together with PIK3CG participates in neutrophil respiratory burst. Plays important roles in mast-cell development and mast cell mediated allergic response. Involved in stem cell factor (SCF)-mediated proliferation, adhesion and migration. Required for allergen-IgE-induced degranulation and cytokine release. The lipid kinase activity is required for its biological function. Isoform 2 may be involved in stabilizing total RAS levels, resulting in increased ERK phosphorylation and increased PI3K activity. This Homo sapiens (Human) protein is Phosphatidylinositol 4,5-bisphosphate 3-kinase catalytic subunit delta isoform (PIK3CD).